The primary structure comprises 1218 residues: Protein jagged-1 (1218 aa).

A signal peptide spans Met-1–Gly-33. Residues Gln-34–Asp-1067 lie on the Extracellular side of the membrane. Asn-143 is a glycosylation site (N-linked (GlcNAc...) asparagine). A DSL domain is found at Val-185 to Cys-229. Intrachain disulfides connect Cys-187–Cys-196 and Cys-200–Cys-212. Positions Phe-199 to Phe-207 are important for interaction with NOTCH1. N-linked (GlcNAc...) asparagine glycosylation is present at Asn-217. Disulfide bonds link Cys-220/Cys-229, Cys-234/Cys-245, Cys-238/Cys-251, Cys-253/Cys-262, Cys-265/Cys-276, Cys-271/Cys-282, Cys-284/Cys-293, Cys-300/Cys-312, Cys-306/Cys-322, Cys-324/Cys-333, Cys-340/Cys-351, Cys-345/Cys-360, Cys-362/Cys-371, Cys-378/Cys-389, Cys-383/Cys-398, Cys-400/Cys-409, Cys-416/Cys-427, Cys-421/Cys-436, Cys-438/Cys-447, Cys-454/Cys-464, Cys-458/Cys-473, Cys-475/Cys-484, Cys-491/Cys-502, Cys-496/Cys-511, Cys-513/Cys-522, Cys-529/Cys-540, Cys-534/Cys-549, Cys-551/Cys-560, Cys-578/Cys-605, Cys-599/Cys-615, Cys-617/Cys-626, Cys-633/Cys-644, Cys-638/Cys-653, Cys-655/Cys-664, Cys-671/Cys-682, Cys-676/Cys-691, Cys-693/Cys-702, Cys-709/Cys-720, Cys-714/Cys-729, and Cys-731/Cys-740. An EGF-like 1 domain is found at Asn-230–Asp-263. Residues Lys-264–Asp-294 form the EGF-like 2; atypical domain. 2 EGF-like domains span residues Asp-296 to Glu-334 and Ala-336 to Ser-372. The 37-residue stretch at Asn-374–Gln-410 folds into the EGF-like 5; calcium-binding domain. N-linked (GlcNAc...) asparagine glycosylation is present at Asn-382. Residues Asp-412–Asp-448 form the EGF-like 6; calcium-binding domain. The EGF-like 7; calcium-binding domain occupies Asn-450–Glu-485. Residues Asp-487–Gln-523 enclose the EGF-like 8; calcium-binding domain. 2 EGF-like domains span residues Asp-525 to Ser-561 and Asp-586 to His-627. Asn-559 carries N-linked (GlcNAc...) asparagine glycosylation. The EGF-like 11; calcium-binding domain occupies Asn-629–Glu-665. An EGF-like 12; calcium-binding domain is found at Asn-667 to His-703. EGF-like domains follow at residues Arg-705 to Asn-741 and Arg-744 to Thr-780. N-linked (GlcNAc...) asparagine glycosylation occurs at Asn-745. 9 disulfide bridges follow: Cys-748/Cys-759, Cys-753/Cys-768, Cys-770/Cys-779, Cys-786/Cys-797, Cys-791/Cys-806, Cys-808/Cys-817, Cys-824/Cys-835, Cys-829/Cys-844, and Cys-846/Cys-855. The region spanning Asn-782–Arg-818 is the EGF-like 15; calcium-binding domain. An EGF-like 16; calcium-binding domain is found at Asn-820–His-856. N-linked (GlcNAc...) asparagine glycosylation is found at Asn-960, Asn-991, Asn-1045, and Asn-1064. A helical membrane pass occupies residues Phe-1068 to Val-1093. Over Arg-1094–Val-1218 the chain is Cytoplasmic. Residues Arg-1181–Val-1218 are disordered. Residues Gly-1188–Lys-1199 show a composition bias toward polar residues.

In terms of assembly, interacts with NOTCH1, NOTCH2 and NOTCH3. Widely expressed in many tissues, with highest expression in brain, heart, muscle and thymus.

It is found in the membrane. The protein localises to the cell membrane. In terms of biological role, ligand for multiple Notch receptors and involved in the mediation of Notch signaling. May be involved in cell-fate decisions during hematopoiesis. Seems to be involved in early and late stages of mammalian cardiovascular development. Inhibits myoblast differentiation. May regulate fibroblast growth factor-induced angiogenesis. The polypeptide is Protein jagged-1 (Jag1) (Mus musculus (Mouse)).